The following is a 250-amino-acid chain: Enoyl-[acyl-carrier-protein] reductase [NADPH] FabL (250 aa).

Residues 13–16, 36–38, 62–63, and N89 contribute to the NADP(+) site; these read SRGV, ARS, and NV. Residues Y151 and K158 each act as proton acceptor in the active site. Residues K158 and 187 to 189 each bind NADP(+); that span reads IDT.

It belongs to the short-chain dehydrogenases/reductases (SDR) family. As to quaternary structure, homotetramer.

The catalysed reaction is a 2,3-saturated acyl-[ACP] + NADP(+) = a (2E)-enoyl-[ACP] + NADPH + H(+). The enzyme catalyses (2E)-butenoyl-[ACP] + NADPH + H(+) = butanoyl-[ACP] + NADP(+). It functions in the pathway lipid metabolism; fatty acid biosynthesis. Inhibited by triclosan. In terms of biological role, catalyzes the reduction of a carbon-carbon double bond in an enoyl moiety that is covalently linked to an acyl carrier protein (ACP). It confers resistance to triclosan. In Bacillus subtilis (strain 168), this protein is Enoyl-[acyl-carrier-protein] reductase [NADPH] FabL (fabL).